Consider the following 245-residue polypeptide: Probable transcriptional regulatory protein MARTH_orf271 (245 aa).

The protein belongs to the TACO1 family.

The protein localises to the cytoplasm. The chain is Probable transcriptional regulatory protein MARTH_orf271 from Metamycoplasma arthritidis (strain 158L3-1) (Mycoplasma arthritidis).